The primary structure comprises 427 residues: Putative FBD-associated F-box protein At3g50710 (427 aa).

An F-box domain is found at 1–53; that stretch reads MDRISNLSDDLLLKIVSSLPTKDVVVTMLLSKRWKFLWMMVPKLRFDDEFELE. One can recognise an FBD domain in the interval 345 to 395; the sequence is HWEEPSSVPQCLLFHLNIFEWKYYNAGDEEKKVVAYILKNARQLKTATFSA.

This chain is Putative FBD-associated F-box protein At3g50710, found in Arabidopsis thaliana (Mouse-ear cress).